The following is a 515-amino-acid chain: ATP synthase subunit alpha (515 aa).

171-178 (GDRQTGKT) lines the ATP pocket.

It belongs to the ATPase alpha/beta chains family. As to quaternary structure, F-type ATPases have 2 components, CF(1) - the catalytic core - and CF(0) - the membrane proton channel. CF(1) has five subunits: alpha(3), beta(3), gamma(1), delta(1), epsilon(1). CF(0) has three main subunits: a(1), b(2) and c(9-12). The alpha and beta chains form an alternating ring which encloses part of the gamma chain. CF(1) is attached to CF(0) by a central stalk formed by the gamma and epsilon chains, while a peripheral stalk is formed by the delta and b chains.

The protein resides in the cell inner membrane. It catalyses the reaction ATP + H2O + 4 H(+)(in) = ADP + phosphate + 5 H(+)(out). Its function is as follows. Produces ATP from ADP in the presence of a proton gradient across the membrane. The alpha chain is a regulatory subunit. The polypeptide is ATP synthase subunit alpha (Stenotrophomonas maltophilia (strain R551-3)).